Consider the following 273-residue polypeptide: Type II pantothenate kinase (273 aa).

8 to 15 serves as a coordination point for ATP; it reads DAGGTLTK. Glu76 (proton acceptor) is an active-site residue. ATP contacts are provided by residues Thr105, 127-131, Phe143, and Ser230; that span reads GGTIM.

The protein belongs to the type II pantothenate kinase family. In terms of assembly, homodimer.

Its subcellular location is the cytoplasm. It catalyses the reaction (R)-pantothenate + ATP = (R)-4'-phosphopantothenate + ADP + H(+). It participates in cofactor biosynthesis; coenzyme A biosynthesis; CoA from (R)-pantothenate: step 1/5. Functionally, catalyzes the phosphorylation of pantothenate (Pan), the first step in CoA biosynthesis. This is Type II pantothenate kinase from Bacillus cereus (strain G9842).